A 114-amino-acid polypeptide reads, in one-letter code: SCP2 domain-containing protein YusD (114 aa).

One can recognise an SCP2 domain in the interval 21–101; that stretch reads NASTLLITFQ…RALLKLEAIL (81 aa).

The sequence is that of SCP2 domain-containing protein YusD (yusD) from Bacillus subtilis (strain 168).